Consider the following 249-residue polypeptide: 1-(5-phosphoribosyl)-5-[(5-phosphoribosylamino)methylideneamino] imidazole-4-carboxamide isomerase (249 aa).

The active-site Proton acceptor is the Asp-8. Asp-130 serves as the catalytic Proton donor.

This sequence belongs to the HisA/HisF family.

The protein resides in the cytoplasm. It catalyses the reaction 1-(5-phospho-beta-D-ribosyl)-5-[(5-phospho-beta-D-ribosylamino)methylideneamino]imidazole-4-carboxamide = 5-[(5-phospho-1-deoxy-D-ribulos-1-ylimino)methylamino]-1-(5-phospho-beta-D-ribosyl)imidazole-4-carboxamide. The protein operates within amino-acid biosynthesis; L-histidine biosynthesis; L-histidine from 5-phospho-alpha-D-ribose 1-diphosphate: step 4/9. The protein is 1-(5-phosphoribosyl)-5-[(5-phosphoribosylamino)methylideneamino] imidazole-4-carboxamide isomerase of Chromohalobacter salexigens (strain ATCC BAA-138 / DSM 3043 / CIP 106854 / NCIMB 13768 / 1H11).